Reading from the N-terminus, the 132-residue chain is Small ribosomal subunit protein uS8 (132 aa).

The protein belongs to the universal ribosomal protein uS8 family. As to quaternary structure, part of the 30S ribosomal subunit. Contacts proteins S5 and S12.

Functionally, one of the primary rRNA binding proteins, it binds directly to 16S rRNA central domain where it helps coordinate assembly of the platform of the 30S subunit. This is Small ribosomal subunit protein uS8 from Mycoplasmopsis pulmonis (strain UAB CTIP) (Mycoplasma pulmonis).